Consider the following 394-residue polypeptide: Probable fatty acid methyltransferase (394 aa).

Residues 128–129 (YS), 163–171 (LLDVGCGWG), and 189–194 (TLSKEQ) contribute to the S-adenosyl-L-methionine site. Cysteine 358 is an active-site residue.

The protein belongs to the CFA/CMAS family.

The polypeptide is Probable fatty acid methyltransferase (Pseudomonas putida (Arthrobacter siderocapsulatus)).